We begin with the raw amino-acid sequence, 672 residues long: Threonine--tRNA ligase (672 aa).

The TGS domain occupies 2-60; that stretch reads SEPKNILLTVDGELREVTHGTTGLDLFREKPTTAVMRVDGLLWDLAREIPAGASVESVD. The tract at residues 260–567 is catalytic; it reads DHRKLGAELD…LTEHYAGAFP (308 aa). 3 residues coordinate Zn(2+): Cys366, His417, and His544.

This sequence belongs to the class-II aminoacyl-tRNA synthetase family. Homodimer. Zn(2+) is required as a cofactor.

The protein localises to the cytoplasm. It catalyses the reaction tRNA(Thr) + L-threonine + ATP = L-threonyl-tRNA(Thr) + AMP + diphosphate + H(+). Catalyzes the attachment of threonine to tRNA(Thr) in a two-step reaction: L-threonine is first activated by ATP to form Thr-AMP and then transferred to the acceptor end of tRNA(Thr). Also edits incorrectly charged L-seryl-tRNA(Thr). The polypeptide is Threonine--tRNA ligase (Micrococcus luteus (strain ATCC 4698 / DSM 20030 / JCM 1464 / CCM 169 / CCUG 5858 / IAM 1056 / NBRC 3333 / NCIMB 9278 / NCTC 2665 / VKM Ac-2230) (Micrococcus lysodeikticus)).